Reading from the N-terminus, the 702-residue chain is Ribosomal RNA large subunit methyltransferase K/L (702 aa).

Positions 43–154 (LVYQSLMWSR…KETASIALDL (112 aa)) constitute a THUMP domain.

This sequence belongs to the methyltransferase superfamily. RlmKL family.

It is found in the cytoplasm. It carries out the reaction guanosine(2445) in 23S rRNA + S-adenosyl-L-methionine = N(2)-methylguanosine(2445) in 23S rRNA + S-adenosyl-L-homocysteine + H(+). It catalyses the reaction guanosine(2069) in 23S rRNA + S-adenosyl-L-methionine = N(2)-methylguanosine(2069) in 23S rRNA + S-adenosyl-L-homocysteine + H(+). Specifically methylates the guanine in position 2445 (m2G2445) and the guanine in position 2069 (m7G2069) of 23S rRNA. The chain is Ribosomal RNA large subunit methyltransferase K/L from Shigella boydii serotype 4 (strain Sb227).